The chain runs to 1480 residues: Cystic fibrosis transmembrane conductance regulator (1480 aa).

The Cytoplasmic portion of the chain corresponds to methionine 1–phenylalanine 77. The chain crosses the membrane as a helical span at residues phenylalanine 78–glutamine 98. The region spanning phenylalanine 81 to leucine 365 is the ABC transmembrane type-1 1 domain. Topologically, residues proline 99 to tyrosine 122 are extracellular. The chain crosses the membrane as a helical span at residues leucine 123–histidine 146. Topologically, residues histidine 147–leucine 195 are cytoplasmic. Residues alanine 196–tryptophan 216 traverse the membrane as a helical segment. Residues glutamate 217–serine 222 are Extracellular-facing. Residues alanine 223–methionine 243 traverse the membrane as a helical segment. Residues methionine 244–lysine 298 lie on the Cytoplasmic side of the membrane. A helical transmembrane segment spans residues alanine 299–phenylalanine 319. At leucine 320–threonine 339 the chain is on the extracellular side. Residues isoleucine 340–valine 358 traverse the membrane as a helical segment. At glutamine 359 to serine 858 the chain is on the cytoplasmic side. ATP-binding positions include tryptophan 401, serine 434, glycine 458–threonine 465, and glutamine 493. One can recognise an ABC transporter 1 domain in the interval asparagine 423–glycine 646. Cysteine 524 carries the S-palmitoyl cysteine lipid modification. Phosphoserine is present on residues serine 549 and serine 660. The interval serine 654–glutamate 831 is disordered R region. Serine 670 carries the phosphoserine; by PKA modification. At serine 686 the chain carries Phosphoserine. Residue lysine 688 forms a Glycyl lysine isopeptide (Lys-Gly) (interchain with G-Cter in ubiquitin) linkage. 2 positions are modified to phosphoserine: serine 700 and serine 712. The residue at position 717 (threonine 717) is a Phosphothreonine. Phosphoserine is present on residues serine 737, serine 753, serine 768, serine 790, serine 795, and serine 813. A helical membrane pass occupies residues leucine 859–valine 879. Positions leucine 859–serine 1155 constitute an ABC transmembrane type-1 2 domain. Over valine 880–isoleucine 918 the chain is Extracellular. N-linked (GlcNAc...) asparagine glycans are attached at residues asparagine 894, asparagine 900, and asparagine 909. A discontinuously helical membrane pass occupies residues tyrosine 919–histidine 939. Residues threonine 940 to threonine 990 are Cytoplasmic-facing. Residues isoleucine 991 to leucine 1011 traverse the membrane as a helical segment. Residues glutamine 1012–proline 1013 are Extracellular-facing. A helical membrane pass occupies residues tyrosine 1014–leucine 1034. The Cytoplasmic portion of the chain corresponds to glutamine 1035–threonine 1095. The helical transmembrane segment at leucine 1096–phenylalanine 1116 threads the bilayer. At isoleucine 1117 to glycine 1130 the chain is on the extracellular side. Residues isoleucine 1131–isoleucine 1151 traverse the membrane as a helical segment. The Cytoplasmic portion of the chain corresponds to aspartate 1152–leucine 1480. One can recognise an ABC transporter 2 domain in the interval methionine 1210–histidine 1443. Residues tyrosine 1219 and glycine 1244–serine 1251 each bind ATP. The segment at arginine 1386–leucine 1480 is interaction with GORASP2. Cysteine 1395 is lipidated: S-palmitoyl cysteine. Serine 1444 and serine 1456 each carry phosphoserine. The disordered stretch occupies residues histidine 1452 to leucine 1480. Residues glutamate 1470–leucine 1480 are compositionally biased toward acidic residues. The PDZ-binding signature appears at threonine 1478–leucine 1480.

The protein belongs to the ABC transporter superfamily. ABCC family. CFTR transporter (TC 3.A.1.202) subfamily. In terms of assembly, monomer; does not require oligomerization for channel activity. May form oligomers in the membrane. Interacts with SLC26A3, SLC26A6 and NHERF1. Interacts with SHANK2. Interacts with MYO6. Interacts (via C-terminus) with GOPC (via PDZ domain); this promotes CFTR internalization and thereby decreases channel activity. Interacts with SLC4A7 through NHERF1. Found in a complex with MYO5B and RAB11A. Interacts with ANO1. Interacts with SLC26A8. Interacts with AHCYL1; the interaction increases CFTR activity. Interacts with CSE1L. The core-glycosylated form interacts with GORASP2 (via PDZ GRASP-type 1 domain) in respone to ER stress. Interacts with MARCHF2; the interaction leads to CFTR ubiqtuitination and degradation. Interacts with ADGRG2. N-glycosylated. Post-translationally, phosphorylated; cAMP treatment promotes phosphorylation and activates the channel. Dephosphorylation decreases the ATPase activity (in vitro). Phosphorylation at PKA sites activates the channel. Phosphorylation at PKC sites enhances the response to phosphorylation by PKA. Phosphorylated by AMPK; this inhibits channel activity. In terms of processing, ubiquitinated, leading to its degradation in the lysosome. Deubiquitination by USP10 in early endosomes enhances its endocytic recycling to the cell membrane. Ubiquitinated by RNF185 during ER stress. Ubiquitinated by MARCHF2.

The protein resides in the apical cell membrane. Its subcellular location is the early endosome membrane. It localises to the cell membrane. The protein localises to the recycling endosome membrane. It is found in the endoplasmic reticulum membrane. The protein resides in the nucleus. It carries out the reaction ATP + H2O + closed Cl(-) channel = ADP + phosphate + open Cl(-) channel.. The catalysed reaction is chloride(in) = chloride(out). The enzyme catalyses hydrogencarbonate(in) = hydrogencarbonate(out). It catalyses the reaction ATP + H2O = ADP + phosphate + H(+). Functionally, epithelial ion channel that plays an important role in the regulation of epithelial ion and water transport and fluid homeostasis. Mediates the transport of chloride ions across the cell membrane. Possesses an intrinsic ATPase activity and utilizes ATP to gate its channel; the passive flow of anions through the channel is gated by cycles of ATP binding and hydrolysis by the ATP-binding domains. The ion channel is also permeable to HCO(3)(-); selectivity depends on the extracellular chloride concentration. Exerts its function also by modulating the activity of other ion channels and transporters. Contributes to the regulation of the pH and the ion content of the epithelial fluid layer. Modulates the activity of the epithelial sodium channel (ENaC) complex, in part by regulating the cell surface expression of the ENaC complex. May regulate bicarbonate secretion and salvage in epithelial cells by regulating the transporter SLC4A7. Can inhibit the chloride channel activity of ANO1. Plays a role in the chloride and bicarbonate homeostasis during sperm epididymal maturation and capacitation. The protein is Cystic fibrosis transmembrane conductance regulator of Ateles geoffroyi (Black-handed spider monkey).